Reading from the N-terminus, the 122-residue chain is Phosphoribosyl-ATP pyrophosphatase (122 aa).

The protein belongs to the PRA-PH family.

The protein resides in the cytoplasm. It catalyses the reaction 1-(5-phospho-beta-D-ribosyl)-ATP + H2O = 1-(5-phospho-beta-D-ribosyl)-5'-AMP + diphosphate + H(+). It participates in amino-acid biosynthesis; L-histidine biosynthesis; L-histidine from 5-phospho-alpha-D-ribose 1-diphosphate: step 2/9. The chain is Phosphoribosyl-ATP pyrophosphatase from Cupriavidus metallidurans (strain ATCC 43123 / DSM 2839 / NBRC 102507 / CH34) (Ralstonia metallidurans).